The chain runs to 99 residues: U8-agatoxin-Ao1a (99 aa).

The N-terminal stretch at 1–19 (MKSLLFVTIAVYFVAQAVT) is a signal peptide. Positions 20–45 (ANLLSNFLGSSLIDDDKGNMHKLYKR) are excised as a propeptide.

It belongs to the neurotoxin 02 (plectoxin) family. Contains 5 disulfide bonds. In terms of tissue distribution, expressed by the venom gland.

The protein resides in the secreted. In Agelena orientalis (Funnel-web spider), this protein is U8-agatoxin-Ao1a.